The following is a 127-amino-acid chain: Glycine cleavage system H protein (127 aa).

One can recognise a Lipoyl-binding domain in the interval 24-106 (TATLGISAFA…YGEGWLVKVQ (83 aa)). At Lys-65 the chain carries N6-lipoyllysine.

The protein belongs to the GcvH family. In terms of assembly, the glycine cleavage system is composed of four proteins: P, T, L and H. The cofactor is (R)-lipoate.

The glycine cleavage system catalyzes the degradation of glycine. The H protein shuttles the methylamine group of glycine from the P protein to the T protein. The chain is Glycine cleavage system H protein from Thermosynechococcus vestitus (strain NIES-2133 / IAM M-273 / BP-1).